Consider the following 652-residue polypeptide: DNA ligase (652 aa).

Residues 29–33 (DSEYD), 78–79 (SL), and E107 contribute to the NAD(+) site. Catalysis depends on K109, which acts as the N6-AMP-lysine intermediate. Residues R130, E164, K278, and K302 each contribute to the NAD(+) site. The Zn(2+) site is built by C395, C398, C413, and C418. The 76-residue stretch at 577–652 (VADAALSGLT…VRDEAWLESL (76 aa)) folds into the BRCT domain.

This sequence belongs to the NAD-dependent DNA ligase family. LigA subfamily. Mg(2+) is required as a cofactor. Requires Mn(2+) as cofactor.

The enzyme catalyses NAD(+) + (deoxyribonucleotide)n-3'-hydroxyl + 5'-phospho-(deoxyribonucleotide)m = (deoxyribonucleotide)n+m + AMP + beta-nicotinamide D-nucleotide.. DNA ligase that catalyzes the formation of phosphodiester linkages between 5'-phosphoryl and 3'-hydroxyl groups in double-stranded DNA using NAD as a coenzyme and as the energy source for the reaction. It is essential for DNA replication and repair of damaged DNA. The sequence is that of DNA ligase from Streptococcus pneumoniae (strain CGSP14).